The primary structure comprises 565 residues: Probable peptidoglycan D,D-transpeptidase PbpC (565 aa).

The chain crosses the membrane as a helical span at residues 10–30 (FILVVTLFVLASLAVSGRLVY). Catalysis depends on Ser-289, which acts as the Acyl-ester intermediate.

The protein belongs to the transpeptidase family. FtsI subfamily.

It is found in the cell inner membrane. It catalyses the reaction Preferential cleavage: (Ac)2-L-Lys-D-Ala-|-D-Ala. Also transpeptidation of peptidyl-alanyl moieties that are N-acyl substituents of D-alanine.. The protein operates within cell wall biogenesis; peptidoglycan biosynthesis. In terms of biological role, catalyzes cross-linking of the peptidoglycan cell wall at the division septum. Binds penicillin. This Pseudomonas aeruginosa (strain ATCC 15692 / DSM 22644 / CIP 104116 / JCM 14847 / LMG 12228 / 1C / PRS 101 / PAO1) protein is Probable peptidoglycan D,D-transpeptidase PbpC.